Reading from the N-terminus, the 399-residue chain is Probable aspartate/prephenate aminotransferase (399 aa).

3 residues coordinate L-aspartate: G39, W125, and N175. K239 is modified (N6-(pyridoxal phosphate)lysine). R375 contacts L-aspartate.

This sequence belongs to the class-I pyridoxal-phosphate-dependent aminotransferase family. Homodimer. Pyridoxal 5'-phosphate serves as cofactor.

It localises to the cytoplasm. The enzyme catalyses L-aspartate + 2-oxoglutarate = oxaloacetate + L-glutamate. It catalyses the reaction L-arogenate + 2-oxoglutarate = prephenate + L-glutamate. Catalyzes the reversible conversion of aspartate and 2-oxoglutarate to glutamate and oxaloacetate. Can also transaminate prephenate in the presence of glutamate. The protein is Probable aspartate/prephenate aminotransferase (aatA) of Rickettsia prowazekii (strain Madrid E).